The sequence spans 413 residues: Phosphopentomutase (413 aa).

D11, D306, H311, D347, H348, and H359 together coordinate Mn(2+).

This sequence belongs to the phosphopentomutase family. Mn(2+) is required as a cofactor.

Its subcellular location is the cytoplasm. It catalyses the reaction 2-deoxy-alpha-D-ribose 1-phosphate = 2-deoxy-D-ribose 5-phosphate. The catalysed reaction is alpha-D-ribose 1-phosphate = D-ribose 5-phosphate. It functions in the pathway carbohydrate degradation; 2-deoxy-D-ribose 1-phosphate degradation; D-glyceraldehyde 3-phosphate and acetaldehyde from 2-deoxy-alpha-D-ribose 1-phosphate: step 1/2. Its function is as follows. Isomerase that catalyzes the conversion of deoxy-ribose 1-phosphate (dRib-1-P) and ribose 1-phosphate (Rib-1-P) to deoxy-ribose 5-phosphate (dRib-5-P) and ribose 5-phosphate (Rib-5-P), respectively. In Helicobacter pylori (strain G27), this protein is Phosphopentomutase.